A 423-amino-acid polypeptide reads, in one-letter code: Cytidylate cyclase (423 aa).

One can recognise a Guanylate cyclase domain in the interval cysteine 79–glycine 184. Phenylalanine 82 provides a ligand contact to a ribonucleoside 5'-triphosphate. Mn(2+) is bound by residues aspartate 84, isoleucine 85, and aspartate 128. The AGS-C domain stretch occupies residues glutamate 290–isoleucine 409.

It belongs to the adenylyl cyclase class-4/guanylyl cyclase family. Pyrimidine cyclase subfamily. Homodimer. The cofactor is Mn(2+).

It localises to the cytoplasm. The enzyme catalyses CTP = 3',5'-cyclic CMP + diphosphate. Its function is as follows. Pycsar (pyrimidine cyclase system for antiphage resistance) provides immunity against bacteriophage. The pyrimidine cyclase (PycC) synthesizes cyclic nucleotides in response to infection; these serve as specific second messenger signals. The signal activates the adjacent effector, leading to bacterial cell death and abortive phage infection. A clade E Pycsar system. In terms of biological role, the pyrimidine cyclase gene of a two-gene Pycsar system, weakly generates cyclic CMP (cCMP) from CTP, has little to no activity on ATP, GTP or UTP. Expression of this and adjacent effector SaPycTM (AC P0DV39) probably confers resistance to bacteriophage. The genes are probably only expressed in response to bacteriophage infection. This is Cytidylate cyclase from Staphylococcus aureus.